The primary structure comprises 711 residues: Consortin (711 aa).

Disordered regions lie at residues 1 to 157 (MDDS…NDPP), 294 to 332 (AVGT…GCHQ), 370 to 389 (ETAG…KDSS), 394 to 432 (PPTE…PGLI), and 457 to 496 (PRDQ…ESAL). Residues 1-650 (MDDSDPPTYS…LEQDEVGGGS (650 aa)) are Cytoplasmic-facing. The segment covering 63-77 (VSEQDSLNNNESFPS) has biased composition (polar residues). Positions 109–120 (PAKRSPRAKKSS) are enriched in basic residues. 2 stretches are compositionally biased toward basic and acidic residues: residues 396–407 (TEDHCGVARDPK) and 457–471 (PRDQ…EPRQ). The segment covering 478 to 487 (DGKSAQSQAG) has biased composition (polar residues). Residues 651 to 671 (CILLILLCIATVFLSVGGTAL) form a helical membrane-spanning segment. Over 672–711 (YCTLGNIESPVCTDFADNVDFYYTKLLQGVAGLKHWVYLS) the chain is Extracellular.

It belongs to the CNST family. As to quaternary structure, interacts with connexins GJA1/CX43, GJB1/CX32, GJB2/CX26, GJB3/CX31, GJB6/CX30 and GJC1/CX45. Also interacts with GGA1 and GGA2. Does not interact with PANX1.

It localises to the cell membrane. Its subcellular location is the golgi apparatus. The protein resides in the trans-Golgi network membrane. The protein localises to the cytoplasmic vesicle. It is found in the secretory vesicle. In terms of biological role, required for targeting of connexins to the plasma membrane. The sequence is that of Consortin (Cnst) from Mus musculus (Mouse).